The primary structure comprises 165 residues: 6,7-dimethyl-8-ribityllumazine synthase (165 aa).

Residues Trp-26, 58 to 60 (SIE), and 80 to 82 (VVI) contribute to the 5-amino-6-(D-ribitylamino)uracil site. 85-86 (GT) is a binding site for (2S)-2-hydroxy-3-oxobutyl phosphate. His-88 acts as the Proton donor in catalysis. Residue Asn-113 participates in 5-amino-6-(D-ribitylamino)uracil binding. Residue Arg-127 coordinates (2S)-2-hydroxy-3-oxobutyl phosphate.

Belongs to the DMRL synthase family.

It carries out the reaction (2S)-2-hydroxy-3-oxobutyl phosphate + 5-amino-6-(D-ribitylamino)uracil = 6,7-dimethyl-8-(1-D-ribityl)lumazine + phosphate + 2 H2O + H(+). It functions in the pathway cofactor biosynthesis; riboflavin biosynthesis; riboflavin from 2-hydroxy-3-oxobutyl phosphate and 5-amino-6-(D-ribitylamino)uracil: step 1/2. Its function is as follows. Catalyzes the formation of 6,7-dimethyl-8-ribityllumazine by condensation of 5-amino-6-(D-ribitylamino)uracil with 3,4-dihydroxy-2-butanone 4-phosphate. This is the penultimate step in the biosynthesis of riboflavin. In Saccharopolyspora erythraea (strain ATCC 11635 / DSM 40517 / JCM 4748 / NBRC 13426 / NCIMB 8594 / NRRL 2338), this protein is 6,7-dimethyl-8-ribityllumazine synthase.